A 125-amino-acid chain; its full sequence is PCNA-associated factor (125 aa).

Positions 1 to 125 (MVRTKADSAG…SEEAADSDDE (125 aa)) are disordered. Residues 8 to 17 (SAGSSASSGS) are compositionally biased toward low complexity. A D-box motif is present at residues 28–39 (RKTFGSSSSGSN). The PIP-box motif lies at 68-79 (QKGIGEFFGSPS). The KEN box signature appears at 85–87 (KEN). The Initiation motif signature appears at 95-107 (EAGGSGAGKAPRK). Over residues 115–125 (PSEEAADSDDE) the composition is skewed to acidic residues.

Interacts with pcna.

The protein resides in the nucleus. It is found in the cytoplasm. Its subcellular location is the perinuclear region. Its function is as follows. PCNA-binding protein that acts as a regulator of DNA repair during DNA replication. Following DNA damage, the interaction with pcna is disrupted, facilitating the interaction between monoubiquitinated pcna and the translesion DNA synthesis DNA polymerase eta (polh) at stalled replisomes, facilitating the bypass of replication-fork-blocking lesions. Also acts as a regulator of centrosome number. The polypeptide is PCNA-associated factor (Xenopus tropicalis (Western clawed frog)).